A 183-amino-acid chain; its full sequence is 3-hydroxydecanoyl-[acyl-carrier-protein] dehydratase (183 aa).

Histidine 77 is an active-site residue.

Belongs to the thioester dehydratase family. FabA subfamily. As to quaternary structure, homodimer.

Its subcellular location is the cytoplasm. The enzyme catalyses a (3R)-hydroxyacyl-[ACP] = a (2E)-enoyl-[ACP] + H2O. It catalyses the reaction (3R)-hydroxydecanoyl-[ACP] = (2E)-decenoyl-[ACP] + H2O. The catalysed reaction is (2E)-decenoyl-[ACP] = (3Z)-decenoyl-[ACP]. The protein operates within lipid metabolism; fatty acid biosynthesis. Functionally, necessary for the introduction of cis unsaturation into fatty acids. Catalyzes the dehydration of (3R)-3-hydroxydecanoyl-ACP to E-(2)-decenoyl-ACP and then its isomerization to Z-(3)-decenoyl-ACP. Can catalyze the dehydratase reaction for beta-hydroxyacyl-ACPs with saturated chain lengths up to 16:0, being most active on intermediate chain length. This is 3-hydroxydecanoyl-[acyl-carrier-protein] dehydratase from Hahella chejuensis (strain KCTC 2396).